The chain runs to 483 residues: UDP-glycosyltransferase 85C1 (483 aa).

UDP-alpha-D-glucose is bound by residues Ser304, 360 to 361 (WC), 378 to 386 (HCGWGSIIE), and 400 to 403 (IGDQ).

This sequence belongs to the UDP-glycosyltransferase family.

Functionally, may glycosylate diterpenes or flavonols in leaves. The sequence is that of UDP-glycosyltransferase 85C1 from Stevia rebaudiana (Stevia).